We begin with the raw amino-acid sequence, 374 residues long: Large ribosomal subunit protein bL27m (374 aa).

Residues Met-1–His-41 constitute a mitochondrion transit peptide.

It belongs to the bacterial ribosomal protein bL27 family.

The protein resides in the mitochondrion. Functionally, component of the large subunit of mitochondrial ribosome. The sequence is that of Large ribosomal subunit protein bL27m (MRPL2) from Yarrowia lipolytica (strain CLIB 122 / E 150) (Yeast).